Consider the following 236-residue polypeptide: Biosynthetic peptidoglycan transglycosylase (236 aa).

The chain crosses the membrane as a helical span at residues 12 to 31 (ALLWFAAGSALVVLVLRWVP).

This sequence belongs to the glycosyltransferase 51 family.

The protein localises to the cell inner membrane. The catalysed reaction is [GlcNAc-(1-&gt;4)-Mur2Ac(oyl-L-Ala-gamma-D-Glu-L-Lys-D-Ala-D-Ala)](n)-di-trans,octa-cis-undecaprenyl diphosphate + beta-D-GlcNAc-(1-&gt;4)-Mur2Ac(oyl-L-Ala-gamma-D-Glu-L-Lys-D-Ala-D-Ala)-di-trans,octa-cis-undecaprenyl diphosphate = [GlcNAc-(1-&gt;4)-Mur2Ac(oyl-L-Ala-gamma-D-Glu-L-Lys-D-Ala-D-Ala)](n+1)-di-trans,octa-cis-undecaprenyl diphosphate + di-trans,octa-cis-undecaprenyl diphosphate + H(+). Its pathway is cell wall biogenesis; peptidoglycan biosynthesis. Its function is as follows. Peptidoglycan polymerase that catalyzes glycan chain elongation from lipid-linked precursors. The polypeptide is Biosynthetic peptidoglycan transglycosylase (Pseudomonas syringae pv. tomato (strain ATCC BAA-871 / DC3000)).